A 111-amino-acid polypeptide reads, in one-letter code: Large ribosomal subunit protein uL22 (111 aa).

Belongs to the universal ribosomal protein uL22 family. In terms of assembly, part of the 50S ribosomal subunit.

In terms of biological role, this protein binds specifically to 23S rRNA; its binding is stimulated by other ribosomal proteins, e.g. L4, L17, and L20. It is important during the early stages of 50S assembly. It makes multiple contacts with different domains of the 23S rRNA in the assembled 50S subunit and ribosome. Its function is as follows. The globular domain of the protein is located near the polypeptide exit tunnel on the outside of the subunit, while an extended beta-hairpin is found that lines the wall of the exit tunnel in the center of the 70S ribosome. This chain is Large ribosomal subunit protein uL22, found in Chlamydia muridarum (strain MoPn / Nigg).